The chain runs to 1421 residues: MKYLKGLLLPALLALAPSATAAKDAPSIETTTFSNELVNLQYFDDSTVALVQELGSGKIYRSPDAGKAWKELKDLKKGLGIIKNPYDNKVALVLGEEQHWITYDQGETWQDFKTEYSPSPNGPVSWHSQDNKKILIHEIEDCLFTPCLGLTYYTTDGFKTKPKTLVEGRRMCQWAKGSERFLEGQEKHDDRILCILRGKYSDRSKDFRLMISDDYFKTAEEPVMSSGRTVQGMANMAAVKGYLVAAVKADHSSELSLYVTQDTENWHHAQFGNGKIEEDAYTILESTNYSIQVDVMSSKYVSIGSLYTSNSDGLYFTKNVDNTNRNPDGFVDFEKIANIQGVVLVNIVDNAKAVQERGAHKKLKSRISFDDGRTFEELKVKGSDKELHLHSSPGIVMGVGNTGDELGKYTDGDLYVSDDAGLTWELALDEAHKYEFGDQGSVLVAVFDEGDTDKVMYSLKHGRKDTWKSIDLGYKIRARELTTLSDSTSLRFLLYGSKKKDGGGREHVLIQLDFNDLHERKCEDKDFDPKWSDPTPTFESCECDEFRDFECDFGFKPEGEGKDKKCVPEKLTLPKDACKNGDSTYMGSSGWRKISGNQCKGGSKKDEKTERKCDEADLPPPKSDKITSEITRFKGSNFLEQYYLERSTQNDDDETDHDETVVMLTDERTAWITHDHGKQWKKAVDDEVVRIYPHQYDNNYVYFLTASKKVHYSEDRGLRNSIHSFEAPVMPNQEMLQILQFHPKQKGWLIWMGGKNCEKVNSKECHTAAYVSQKNGKDESWEPLVSYVKKCAFVWREAGRDVKEERVFCEQHANEETGAPLQLISSDDWFKKQDVKFKSVVEIALMSEFIIVATKEKDDTLRLDASLDANTFAEARFPPKFFDIHQTAYTVLDSSTHAIFLHVTVNPRVDQEYGSIIKSNSNGTSYVLSLNAVNRNTEGYVDFEKMQGLEGVAIANVVVNVNEVNDGAKKKKQTRITHNDGADWREKDAEGKAYECAGKGEEKCALHVHGYTERADPREMYSSPTAVGLMLAVGNVGEELGTFGEADTYMTTDAGLTWKEIKKGSYAWEFGDQGSVIVIVRRGEDTDHVYYTLDSGEKWNLYQFSERKIRVDAITTVPSDTSLNFLLWGKDGKELVAVNLDFSGLPQFQRKCDLDEKDPEKGDFDLWIPQHPLQPDDKQCLFGHVAEYHRKKRDAECRNGQRIDHMHNIQRNCTCTRRDYECAYNYERQPGGECKLIEGLDLEDPTAVCSKGAKEFWDVSPYRKIPLSTCEGGNEFDHMGDVHPCPGFEEEFEKKHGISGFGLFMAIVLPFAAAGGIGYYVWRNWDGKFGRIRLGENGGAFDSDSRWVQWPIAAISGLVAVVAAIPMLVGSLYRMVTGRMGGGYGGRTYTSRSSFARGRGDYAVVDPDEGELLGDDSDEEV.

An N-terminal signal peptide occupies residues 1–21; that stretch reads MKYLKGLLLPALLALAPSATA. The Lumenal segment spans residues 22 to 1296; the sequence is AKDAPSIETT…GFEEEFEKKH (1275 aa). The stretch at 100-110 is one BNR 1 repeat; sequence WITYDQGETWQ. Asn288 is a glycosylation site (N-linked (GlcNAc...) asparagine). 2 BNR repeats span residues 367–376 and 415–425; these read ISFDDGRTFE and YVSDDAGLTWE. The tract at residues 596-625 is disordered; it reads GNQCKGGSKKDEKTERKCDEADLPPPKSDK. Residues 603–615 show a composition bias toward basic and acidic residues; sequence SKKDEKTERKCDE. One copy of the BNR 4 repeat lies at 671–682; the sequence is WITHDHGKQWKK. N-linked (GlcNAc...) asparagine glycosylation occurs at Asn922. Residues 1049-1059 form a BNR 5 repeat; sequence YMTTDAGLTWK. An N-linked (GlcNAc...) asparagine glycan is attached at Asn1212. A helical transmembrane segment spans residues 1297–1317; sequence GISGFGLFMAIVLPFAAAGGI. At 1318-1349 the chain is on the cytoplasmic side; sequence GYYVWRNWDGKFGRIRLGENGGAFDSDSRWVQ. A helical membrane pass occupies residues 1350-1370; that stretch reads WPIAAISGLVAVVAAIPMLVG. The Lumenal portion of the chain corresponds to 1371–1421; it reads SLYRMVTGRMGGGYGGRTYTSRSSFARGRGDYAVVDPDEGELLGDDSDEEV.

The protein belongs to the VPS10-related sortilin family.

It is found in the golgi apparatus. The protein localises to the trans-Golgi network membrane. It localises to the prevacuolar compartment membrane. Functions as a sorting receptor in the Golgi compartment required for the intracellular sorting and delivery of soluble vacuolar proteins, like carboxypeptidase Y (CPY) and proteinase A. Executes multiple rounds of sorting by cycling between the late Golgi and a prevacuolar endosome-like compartment. The sequence is that of Vacuolar protein sorting/targeting protein 10 (VPS10) from Phaeosphaeria nodorum (strain SN15 / ATCC MYA-4574 / FGSC 10173) (Glume blotch fungus).